We begin with the raw amino-acid sequence, 496 residues long: Autophagy-related protein 21 (496 aa).

The tract at residues 41–86 (SKKKTSNNNGSASNSESRNNEESILITNGSRDRTDAEEEEDNEDNA) is disordered. The segment covering 46–57 (SNNNGSASNSES) has biased composition (low complexity). The span at 75-84 (DAEEEEDNED) shows a compositional bias: acidic residues. Thr-213 carries the phosphothreonine modification. Residue Ser-237 is modified to Phosphoserine. WD repeat units follow at residues 294-334 (VHKG…DYMS), 346-385 (TRLC…NSLP), and 448-488 (VNES…GECV). The short motif at 342–346 (FRRGT) is the L/FRRG motif element.

It belongs to the WD repeat PROPPIN family.

The protein resides in the cytoplasm. The protein localises to the vacuole. In terms of biological role, required for cytoplasm to vacuole transport (Cvt) vesicles formation and mitophagy. Involved in binding of phosphatidylethanolamine to ATG8 and in recruitment of ATG8 and ATG5 to the pre-autophagosomal structure. Protects ATG8 from ARG4-mediated cleavage. Essential for maturation of proaminopeptidase I. The chain is Autophagy-related protein 21 (ATG21) from Saccharomyces cerevisiae (strain ATCC 204508 / S288c) (Baker's yeast).